The primary structure comprises 491 residues: Cysteine--tRNA ligase (491 aa).

C31 is a binding site for Zn(2+). The 'HIGH' region signature appears at 33–43 (PTVYGDAHLGH). Zn(2+)-binding residues include C226, H251, and E255. Residues 283 to 287 (KMGKS) carry the 'KMSKS' region motif. ATP is bound at residue K286.

The protein belongs to the class-I aminoacyl-tRNA synthetase family. As to quaternary structure, monomer. Requires Zn(2+) as cofactor.

It localises to the cytoplasm. It catalyses the reaction tRNA(Cys) + L-cysteine + ATP = L-cysteinyl-tRNA(Cys) + AMP + diphosphate. This is Cysteine--tRNA ligase from Parabacteroides distasonis (strain ATCC 8503 / DSM 20701 / CIP 104284 / JCM 5825 / NCTC 11152).